Here is a 141-residue protein sequence, read N- to C-terminus: Hemoglobin subunit alpha (141 aa).

A Globin domain is found at 1 to 141; it reads VLSPADKTNV…VSTVLTSKYR (141 aa). The residue at position 3 (Ser3) is a Phosphoserine. The residue at position 7 (Lys7) is an N6-succinyllysine. Phosphothreonine is present on Thr8. Position 11 is an N6-succinyllysine (Lys11). Residue Lys16 is modified to N6-acetyllysine; alternate. N6-succinyllysine; alternate is present on Lys16. Residue Tyr24 is modified to Phosphotyrosine. Position 35 is a phosphoserine (Ser35). The residue at position 40 (Lys40) is an N6-succinyllysine. A Phosphoserine modification is found at Ser49. Position 58 (His58) interacts with O2. Residue His87 participates in heme b binding. Ser102 carries the post-translational modification Phosphoserine. At Thr108 the chain carries Phosphothreonine. 2 positions are modified to phosphoserine: Ser124 and Ser131. Residues Thr134 and Thr137 each carry the phosphothreonine modification. Ser138 carries the post-translational modification Phosphoserine.

Belongs to the globin family. Heterotetramer of two alpha chains and two beta chains. Red blood cells.

Its function is as follows. Involved in oxygen transport from the lung to the various peripheral tissues. Hemopressin acts as an antagonist peptide of the cannabinoid receptor CNR1. Hemopressin-binding efficiently blocks cannabinoid receptor CNR1 and subsequent signaling. The protein is Hemoglobin subunit alpha (HBA) of Urocitellus parryii (Arctic ground squirrel).